The sequence spans 269 residues: Integral membrane protein 2C (269 aa).

Threonine 39 is subject to Phosphothreonine. A helical; Signal-anchor for type II membrane protein membrane pass occupies residues valine 57–alanine 77. In terms of domain architecture, BRICHOS spans phenylalanine 138–leucine 232. Cysteine 165 and cysteine 224 are joined by a disulfide. Residue asparagine 171 is glycosylated (N-linked (GlcNAc...) asparagine).

Belongs to the ITM2 family. In terms of assembly, interacts with BACE1. Interacts with APP. Interacts with STMN2. Post-translationally, type I membrane-bound, as well as soluble, furin has a pre-eminent role in ITM2C proteolytic processing. PCSK7 and PCSK5 may also be involved although to a lesser extent. The soluble form of PCSK7 is incapable of processing ITM2C. Fails to undergo shedding by ADAM10 and intramembrane cleavage by SPPL2B.

The protein resides in the lysosome membrane. It localises to the cell membrane. Functionally, negative regulator of amyloid-beta peptide production. May inhibit the processing of APP by blocking its access to alpha- and beta-secretase. Binding to the beta-secretase-cleaved APP C-terminal fragment is negligible, suggesting that ITM2C is a poor gamma-secretase cleavage inhibitor. May play a role in TNF-induced cell death and neuronal differentiation. This Mus musculus (Mouse) protein is Integral membrane protein 2C (Itm2c).